Here is a 161-residue protein sequence, read N- to C-terminus: uncharacterized protein (161 aa).

This is an uncharacterized protein from Rickettsia conorii (strain ATCC VR-613 / Malish 7).